Reading from the N-terminus, the 510-residue chain is Maturase K (510 aa).

It belongs to the intron maturase 2 family. MatK subfamily.

The protein resides in the plastid. In terms of biological role, usually encoded in the trnK tRNA gene intron. Probably assists in splicing its own and other chloroplast group II introns. In Bartsia alpina (Velvet bells), this protein is Maturase K.